Reading from the N-terminus, the 383-residue chain is NAD(P) transhydrogenase subunit alpha part 1 (383 aa).

Residues 131-134, Val181, 201-203, and Gly231 each bind NAD(+); these read QNMD and DVR.

Belongs to the AlaDH/PNT family. As to quaternary structure, heterotrimer of two alpha chains and a beta (PntB) chain; in Rickettsia, the alpha chain is made of two subunits (PntAA and PntAB) and forms a dimer.

It carries out the reaction NAD(+) + NADPH + H(+)(in) = NADH + NADP(+) + H(+)(out). Its function is as follows. The transhydrogenation between NADH and NADP is coupled to respiration and ATP hydrolysis and functions as a proton pump across the membrane. The chain is NAD(P) transhydrogenase subunit alpha part 1 (pntAA) from Rickettsia prowazekii (strain Madrid E).